Here is a 483-residue protein sequence, read N- to C-terminus: Protein nucleotidyltransferase YdiU (483 aa).

The ATP site is built by glycine 87, glycine 89, arginine 90, lysine 110, aspartate 122, glycine 123, arginine 173, and arginine 180. The Proton acceptor role is filled by aspartate 249. Mg(2+)-binding residues include asparagine 250 and aspartate 259. Aspartate 259 is an ATP binding site.

Belongs to the SELO family. Requires Mg(2+) as cofactor. Mn(2+) serves as cofactor.

It catalyses the reaction L-seryl-[protein] + ATP = 3-O-(5'-adenylyl)-L-seryl-[protein] + diphosphate. The enzyme catalyses L-threonyl-[protein] + ATP = 3-O-(5'-adenylyl)-L-threonyl-[protein] + diphosphate. The catalysed reaction is L-tyrosyl-[protein] + ATP = O-(5'-adenylyl)-L-tyrosyl-[protein] + diphosphate. It carries out the reaction L-histidyl-[protein] + UTP = N(tele)-(5'-uridylyl)-L-histidyl-[protein] + diphosphate. It catalyses the reaction L-seryl-[protein] + UTP = O-(5'-uridylyl)-L-seryl-[protein] + diphosphate. The enzyme catalyses L-tyrosyl-[protein] + UTP = O-(5'-uridylyl)-L-tyrosyl-[protein] + diphosphate. Nucleotidyltransferase involved in the post-translational modification of proteins. It can catalyze the addition of adenosine monophosphate (AMP) or uridine monophosphate (UMP) to a protein, resulting in modifications known as AMPylation and UMPylation. This chain is Protein nucleotidyltransferase YdiU, found in Pectobacterium carotovorum subsp. carotovorum (strain PC1).